The sequence spans 920 residues: 2-oxoadipate dehydrogenase complex component E1 (920 aa).

Positions 299-322 are disordered; that stretch reads QGKTRGRQQVKQDGDYSTDPHSRP. A compositionally biased stretch (basic and acidic residues) spans 308–322; sequence VKQDGDYSTDPHSRP.

Belongs to the alpha-ketoglutarate dehydrogenase family. As to quaternary structure, the 2-oxoadipate dehydrogenase complex is composed of OADH (2-oxoadipate dehydrogenase; E1a), DLST (dihydrolipoamide succinyltransferase; E2) and DLD (dihydrolipoamide dehydrogenase; E3). E1a functional unit is a dimer. Thiamine diphosphate is required as a cofactor.

The protein resides in the mitochondrion. The catalysed reaction is N(6)-[(R)-lipoyl]-L-lysyl-[protein] + 2-oxoadipate + H(+) = N(6)-[(R)-S(8)-glutaryldihydrolipoyl]-L-lysyl-[protein] + CO2. Its pathway is amino-acid degradation. Its function is as follows. 2-oxoadipate dehydrogenase (E1a) component of the 2-oxoadipate dehydrogenase complex (OADHC). Participates in the first step, rate limiting for the overall conversion of 2-oxoadipate (alpha-ketoadipate) to glutaryl-CoA and CO(2) catalyzed by the whole OADHC. Catalyzes the irreversible decarboxylation of 2-oxoadipate via the thiamine diphosphate (ThDP) cofactor and subsequent transfer of the decarboxylated acyl intermediate on an oxidized dihydrolipoyl group that is covalently amidated to the E2 enzyme (dihydrolipoyllysine-residue succinyltransferase or DLST). Can catalyze the decarboxylation of 2-oxoglutarate in vitro, but at a much lower rate than 2-oxoadipate. Responsible for the last step of L-lysine, L-hydroxylysine and L-tryptophan catabolism with the common product being 2-oxoadipate. This is 2-oxoadipate dehydrogenase complex component E1 (dhtkd1) from Danio rerio (Zebrafish).